Here is a 45-residue protein sequence, read N- to C-terminus: uncharacterized protein (45 aa).

The protein belongs to the asfivirus C62L family.

This is an uncharacterized protein from Ornithodoros (relapsing fever ticks).